The sequence spans 183 residues: Non-specific lipid transfer protein GPI-anchored 15 (183 aa).

The N-terminal stretch at 1–24 (MGYRRSYAITFVALVAALWSVTKA) is a signal peptide. Intrachain disulfides connect cysteine 30–cysteine 71, cysteine 40–cysteine 55, cysteine 56–cysteine 97, and cysteine 69–cysteine 107. Residues asparagine 47 and asparagine 86 are each glycosylated (N-linked (GlcNAc...) asparagine). The segment at 108-158 (NAATGPTAQPPAPSPTEKTPDVTLTPTSLPGARSGVGGGSKTVPSVGTGSS) is disordered. The segment covering 149–158 (TVPSVGTGSS) has biased composition (polar residues). Serine 158 is lipidated: GPI-anchor amidated serine. Residues 159–183 (SRNVDPLPLHFLMFAVLVVCTSSFL) constitute a propeptide, removed in mature form.

It belongs to the plant LTP family. In terms of tissue distribution, expressed in seedlings, preferentially in the endodermis of hypocotyls and roots. Also observed in siliques.

Its subcellular location is the cell membrane. Probable lipid transfer protein. In Arabidopsis thaliana (Mouse-ear cress), this protein is Non-specific lipid transfer protein GPI-anchored 15.